The chain runs to 196 residues: Corrinoid adenosyltransferase (196 aa).

36 to 42 (GNGKGKT) lines the ATP pocket.

The protein belongs to the Cob(I)alamin adenosyltransferase family.

It localises to the cytoplasm. It carries out the reaction 2 cob(II)yrinate a,c diamide + reduced [electron-transfer flavoprotein] + 2 ATP = 2 adenosylcob(III)yrinate a,c-diamide + 2 triphosphate + oxidized [electron-transfer flavoprotein] + 3 H(+). The catalysed reaction is 2 cob(II)alamin + reduced [electron-transfer flavoprotein] + 2 ATP = 2 adenosylcob(III)alamin + 2 triphosphate + oxidized [electron-transfer flavoprotein] + 3 H(+). It participates in cofactor biosynthesis; adenosylcobalamin biosynthesis; adenosylcobalamin from cob(II)yrinate a,c-diamide: step 2/7. In terms of biological role, required for both de novo synthesis of the corrin ring for the assimilation of exogenous corrinoids. Participates in the adenosylation of a variety of incomplete and complete corrinoids. This chain is Corrinoid adenosyltransferase (btuR), found in Escherichia coli O6:H1 (strain CFT073 / ATCC 700928 / UPEC).